Reading from the N-terminus, the 200-residue chain is dTDP-4-dehydrorhamnose 3,5-epimerase (200 aa).

Substrate-binding positions include Arg21, Glu26, 45 to 47 (QVN), and Arg57. His60 serves as the catalytic Proton acceptor. 2 residues coordinate substrate: Lys70 and His116. The active-site Proton donor is the Tyr129. 2 residues coordinate substrate: Glu140 and Lys165.

This sequence belongs to the dTDP-4-dehydrorhamnose 3,5-epimerase family.

It carries out the reaction dTDP-4-dehydro-6-deoxy-alpha-D-glucose = dTDP-4-dehydro-beta-L-rhamnose. It participates in carbohydrate biosynthesis; dTDP-L-rhamnose biosynthesis. The protein operates within antibiotic biosynthesis; streptomycin biosynthesis. Its function is as follows. Involved in the biosynthesis of the dihydrostreptose moiety of streptomycin. Catalyzes the epimerization of the C3' and C5'positions of dTDP-6-deoxy-D-xylo-4-hexulose, forming dTDP-6-deoxy-L-lyxo-4-hexulose. In Streptomyces griseus, this protein is dTDP-4-dehydrorhamnose 3,5-epimerase.